Here is a 459-residue protein sequence, read N- to C-terminus: MANITNEFMGHDMLAPFTAGWQSDMEPLVIEKSEGSYVYDINGKKYLDTLSGLWCTTLGGSETRLVEAANKQLNTLPFYHSFWNRTTKPSLDLAKELLNMFTANKMAKVFFTNSGSEANDTQVKLVWYYNNALGRPQKKKIIARAKAYHGSTYISAGLSGLPPMHQKFDLPPPFVLHTECPHYWAYHLPGETEEEFSTRLANNLESLILNEGPETVAAFIAEPVLGAAGVILPPATYFDKVQAILRKHDILFIADEVVCGFGRLGTMFGSDKYNIKPDLVSVAKALSSGYMPIAAVLVSQKISSVILSESNKIGAFCHGFTYSGHPVACAVALEALKIYKERNITEVVNKISQKFQEGLKAFADSPIIGEIRGTGLALSTEFVNNKSPNDPFPYEWAVGTYFGAQCAKYGMLVSSTGDHVNMAPPFTLSLEELDELIRIYGKALKDTEKRVEELKSQKK.

Pyridoxal 5'-phosphate is bound by residues 115–116 and D255; that span reads GS. K284 is modified (N6-(pyridoxal phosphate)lysine). 320–321 is a pyridoxal 5'-phosphate binding site; the sequence is FT. Positions 430 to 457 form a coiled coil; the sequence is LEELDELIRIYGKALKDTEKRVEELKSQ.

Belongs to the class-III pyridoxal-phosphate-dependent aminotransferase family. As to expression, confined to the placenta of green fruits at high levels. Barely detectable in the pericarp and seeds as well as in the placenta of mature fruits.

It carries out the reaction vanillin + L-alanine = vanillylamine + pyruvate. Its pathway is aromatic compound metabolism; phenylpropanoid biosynthesis. Its function is as follows. Involved in the biosynthesis of capsaicinoids natural products, pungent alkaloids synthesized from phenylpropanoid intermediates in the placental tissue of chili pepper fruit acting as repellant on herbivorous mammals and conferring spiciness to hot peppers. Can transfer an amine from vanillylamine to pyruvate forming vanillin and L-alanine. In Capsicum annuum (Capsicum pepper), this protein is Vanillin aminotransferase.